The following is a 108-amino-acid chain: ATP-dependent Clp protease adapter protein ClpS (108 aa).

Belongs to the ClpS family. In terms of assembly, binds to the N-terminal domain of the chaperone ClpA.

Its function is as follows. Involved in the modulation of the specificity of the ClpAP-mediated ATP-dependent protein degradation. In Ralstonia nicotianae (strain ATCC BAA-1114 / GMI1000) (Ralstonia solanacearum), this protein is ATP-dependent Clp protease adapter protein ClpS.